Reading from the N-terminus, the 568-residue chain is Potassium-transporting ATPase potassium-binding subunit (568 aa).

10 helical membrane-spanning segments follow: residues 3–23 (TEVL…YPLG), 68–88 (LLVV…TQGV), 133–153 (FVIM…MAGI), 180–200 (LLPL…PMGF), 256–276 (VECW…GFYL), 281–301 (LGYS…CINV), 375–395 (FGGV…AVFI), 421–441 (IVAL…AYLF), 497–517 (IVLI…AGIL), and 535–555 (VTFG…SFFP).

This sequence belongs to the KdpA family. As to quaternary structure, the system is composed of three essential subunits: KdpA, KdpB and KdpC.

The protein localises to the cell inner membrane. Part of the high-affinity ATP-driven potassium transport (or Kdp) system, which catalyzes the hydrolysis of ATP coupled with the electrogenic transport of potassium into the cytoplasm. This subunit binds the periplasmic potassium ions and delivers the ions to the membrane domain of KdpB through an intramembrane tunnel. The protein is Potassium-transporting ATPase potassium-binding subunit of Phocaeicola vulgatus (strain ATCC 8482 / DSM 1447 / JCM 5826 / CCUG 4940 / NBRC 14291 / NCTC 11154) (Bacteroides vulgatus).